A 162-amino-acid polypeptide reads, in one-letter code: Large ribosomal subunit protein uL10 (162 aa).

It belongs to the universal ribosomal protein uL10 family. Part of the ribosomal stalk of the 50S ribosomal subunit. The N-terminus interacts with L11 and the large rRNA to form the base of the stalk. The C-terminus forms an elongated spine to which L12 dimers bind in a sequential fashion forming a multimeric L10(L12)X complex.

Forms part of the ribosomal stalk, playing a central role in the interaction of the ribosome with GTP-bound translation factors. This is Large ribosomal subunit protein uL10 from Phytoplasma mali (strain AT).